Consider the following 343-residue polypeptide: Sodium/bile acid cotransporter 7-A (343 aa).

Over M1 to E10 the chain is Cytoplasmic. The chain crosses the membrane as a helical span at residues W11–V31. Residues K32–K37 are Extracellular-facing. Residues P38–L58 traverse the membrane as a helical segment. The Cytoplasmic segment spans residues K59–K71. Residues L72–L92 form a helical membrane-spanning segment. At Q93–P116 the chain is on the extracellular side. The helical transmembrane segment at P117–F137 threads the bilayer. A topological domain (cytoplasmic) is located at residue N138. A helical transmembrane segment spans residues S139–G159. At S160–S163 the chain is on the extracellular side. A helical membrane pass occupies residues V164–G184. Residues Q185–P201 are Cytoplasmic-facing. A helical transmembrane segment spans residues F202–F222. Topologically, residues S223–L234 are extracellular. The chain crosses the membrane as a helical span at residues V235–F255. The Cytoplasmic segment spans residues S256–A270. A helical transmembrane segment spans residues I271–F291. The Extracellular portion of the chain corresponds to V292 to S298. A helical transmembrane segment spans residues L299–V319. The Cytoplasmic portion of the chain corresponds to P320–L343.

This sequence belongs to the bile acid:sodium symporter (BASS) (TC 2.A.28) family. Strongly expressed in small intestine. Moderately expressed in spleen. Weakly expressed in skeletal muscle. Not detected in other tissues tested.

The protein resides in the cell membrane. Its subcellular location is the endoplasmic reticulum membrane. It localises to the golgi apparatus membrane. Its function is as follows. Involved in teeth and skeletal development. Has an essential role in the biosynthesis and trafficking of glycosaminoglycans and glycoproteins to produce a proper functioning extracellular matrix. Required for extracellular matrix mineralization. Also involved in the regulation of cellular calcium homeostasis. Does not show transport activity towards bile acids or steroid sulfates. The polypeptide is Sodium/bile acid cotransporter 7-A (slc10a7-a) (Xenopus laevis (African clawed frog)).